The following is a 713-amino-acid chain: Pro-neuregulin-3, membrane-bound isoform (713 aa).

Over 1–362 (MSEGAAGASP…MESEDVYQRQ (362 aa)) the chain is Extracellular. Disordered stretches follow at residues 28–48 (AAAA…AAEP), 119–220 (SSFP…STQA), and 251–282 (AAAS…TTYS). Gly residues predominate over residues 34–44 (AGGGPDGGGEG). The segment covering 127–148 (TTTTTTSTTSPATPSAGGAASS) has biased composition (low complexity). A compositionally biased stretch (polar residues) spans 149-163 (RTPNRISTRLTTITR). 2 stretches are compositionally biased toward low complexity: residues 195–207 (STTA…STPG) and 254–274 (SSSS…STSP). Residues 288–331 (HFKPCRDKDLAYCLNDGECFVIETLTGSHKHCRCKEGYQGVRCD) enclose the EGF-like domain. 3 disulfides stabilise this stretch: Cys-292–Cys-306, Cys-300–Cys-319, and Cys-321–Cys-330. The chain crosses the membrane as a helical span at residues 363 to 383 (VLSISCIIFGIVIVGMFCAAF). At 384–713 (YFKSKKQAKQ…EIQRDSVLTK (330 aa)) the chain is on the cytoplasmic side. A disordered region spans residues 449 to 496 (SAPQSFPEVTSPDRGSQPIKHHSPGQRSGMLHRNTFRRAPPSPRSRLG).

It belongs to the neuregulin family. As to quaternary structure, interacts with ERBB4. Proteolytic cleavage close to the plasma membrane on the external face leads to the release of the soluble growth factor form. In terms of processing, extensive glycosylation precedes the proteolytic cleavage. Expressed in sympathetic, motor, and sensory neurons.

The protein resides in the cell membrane. It is found in the secreted. Its function is as follows. Direct ligand for the ERBB4 tyrosine kinase receptor. Binding results in ligand-stimulated tyrosine phosphorylation and activation of the receptor. Does not bind to the EGF receptor, ERBB2 or ERBB3 receptors. The polypeptide is Pro-neuregulin-3, membrane-bound isoform (Nrg3) (Mus musculus (Mouse)).